We begin with the raw amino-acid sequence, 311 residues long: Methionyl-tRNA formyltransferase (311 aa).

(6S)-5,6,7,8-tetrahydrofolate is bound at residue Ser-112–Pro-115.

It belongs to the Fmt family.

The enzyme catalyses L-methionyl-tRNA(fMet) + (6R)-10-formyltetrahydrofolate = N-formyl-L-methionyl-tRNA(fMet) + (6S)-5,6,7,8-tetrahydrofolate + H(+). Functionally, attaches a formyl group to the free amino group of methionyl-tRNA(fMet). The formyl group appears to play a dual role in the initiator identity of N-formylmethionyl-tRNA by promoting its recognition by IF2 and preventing the misappropriation of this tRNA by the elongation apparatus. The sequence is that of Methionyl-tRNA formyltransferase from Bradyrhizobium sp. (strain BTAi1 / ATCC BAA-1182).